Here is a 470-residue protein sequence, read N- to C-terminus: ATP synthase subunit beta (470 aa).

Residue 158–165 (GGAGVGKT) participates in ATP binding.

Belongs to the ATPase alpha/beta chains family. In terms of assembly, F-type ATPases have 2 components, CF(1) - the catalytic core - and CF(0) - the membrane proton channel. CF(1) has five subunits: alpha(3), beta(3), gamma(1), delta(1), epsilon(1). CF(0) has three main subunits: a(1), b(2) and c(9-12). The alpha and beta chains form an alternating ring which encloses part of the gamma chain. CF(1) is attached to CF(0) by a central stalk formed by the gamma and epsilon chains, while a peripheral stalk is formed by the delta and b chains.

The protein localises to the cell membrane. The enzyme catalyses ATP + H2O + 4 H(+)(in) = ADP + phosphate + 5 H(+)(out). Its function is as follows. Produces ATP from ADP in the presence of a proton gradient across the membrane. The catalytic sites are hosted primarily by the beta subunits. The chain is ATP synthase subunit beta from Halalkalibacterium halodurans (strain ATCC BAA-125 / DSM 18197 / FERM 7344 / JCM 9153 / C-125) (Bacillus halodurans).